Reading from the N-terminus, the 122-residue chain is MGRPLIESSSNDHVANFNRKTKKLIDQALEHYNGRLPEQLENFSFENFVEVLDTESSVVNRVFEVLVREVAGSFRQRKRAHMPRTNTTAQVVQRQLAPSISTVFSRDSNDPLVDDMDQEYIL.

This is an uncharacterized protein from Schizosaccharomyces pombe (strain 972 / ATCC 24843) (Fission yeast).